The primary structure comprises 190 residues: Guanylate kinase (190 aa).

Residues 8-188 (GRLVILAGPS…AVSAIKAVLL (181 aa)) enclose the Guanylate kinase-like domain. 15 to 22 (GPSAVGKS) contacts ATP.

It belongs to the guanylate kinase family.

Its subcellular location is the cytoplasm. The enzyme catalyses GMP + ATP = GDP + ADP. Functionally, essential for recycling GMP and indirectly, cGMP. This chain is Guanylate kinase, found in Corynebacterium efficiens (strain DSM 44549 / YS-314 / AJ 12310 / JCM 11189 / NBRC 100395).